The primary structure comprises 563 residues: Putative cysteine ligase BshC (563 aa).

Belongs to the BshC family.

In Chlorobium phaeobacteroides (strain BS1), this protein is Putative cysteine ligase BshC.